We begin with the raw amino-acid sequence, 201 residues long: ATP synthase subunit b 2 (201 aa).

Over residues 1-17 (MAEQKNPLTTPSPNADT) the composition is skewed to polar residues. The segment at 1–39 (MAEQKNPLTTPSPNADTTIVPAGSPHTHTEQPSGGHGGA) is disordered. The helical transmembrane segment at 47–66 (TFLSQLIWLALAFGLLYYLM) threads the bilayer.

This sequence belongs to the ATPase B chain family. In terms of assembly, F-type ATPases have 2 components, F(1) - the catalytic core - and F(0) - the membrane proton channel. F(1) has five subunits: alpha(3), beta(3), gamma(1), delta(1), epsilon(1). F(0) has three main subunits: a(1), b(2) and c(10-14). The alpha and beta chains form an alternating ring which encloses part of the gamma chain. F(1) is attached to F(0) by a central stalk formed by the gamma and epsilon chains, while a peripheral stalk is formed by the delta and b chains.

The protein resides in the cell inner membrane. Functionally, f(1)F(0) ATP synthase produces ATP from ADP in the presence of a proton or sodium gradient. F-type ATPases consist of two structural domains, F(1) containing the extramembraneous catalytic core and F(0) containing the membrane proton channel, linked together by a central stalk and a peripheral stalk. During catalysis, ATP synthesis in the catalytic domain of F(1) is coupled via a rotary mechanism of the central stalk subunits to proton translocation. Its function is as follows. Component of the F(0) channel, it forms part of the peripheral stalk, linking F(1) to F(0). The b'-subunit is a diverged and duplicated form of b found in plants and photosynthetic bacteria. This chain is ATP synthase subunit b 2 (atpF2), found in Methylorubrum extorquens (strain PA1) (Methylobacterium extorquens).